Here is a 1642-residue protein sequence, read N- to C-terminus: Cholesterol transporter ABCA5 (1642 aa).

Residues 32–52 (SVQEILFPLFFLFWLILISMM) traverse the membrane as a helical segment. N-linked (GlcNAc...) asparagine glycosylation is present at asparagine 86. A run of 6 helical transmembrane segments spans residues 220–240 (VILIYLVIAFSPFGYFLAIHI), 264–284 (LSWVLLYTSLIFLMSLLMAVI), 297–317 (IVIFLLFFLYGLSSVFFALML), 328–348 (GIVEFFVTVAFGFIGLMIILI), 355–375 (LVWLFSPFCHCTFVIGIAQVM), and 396–416 (LIITIIMLTLNSIFYVLLAVY). Residue asparagine 458 is glycosylated (N-linked (GlcNAc...) asparagine). An ABC transporter 1 domain is found at 478-713 (IRISGIQKTY…WGIGYRLSMY (236 aa)). An ATP-binding site is contributed by 514 to 521 (GHSGTGKS). 2 consecutive transmembrane segments (helical) span residues 866–886 (LLLLLIFFTVQIFMFLVHHSF) and 967–987 (VFAAVFNSTMVYSLPILVNII). N-linked (GlcNAc...) asparagine glycosylation occurs at asparagine 996. The next 6 membrane-spanning stretches (helical) occupy residues 1021–1041 (LYFQAALLGIIVTAMPPYFAM), 1071–1091 (VVDIPLFFIILILMLGSLLAF), 1102–1122 (FLAVVFCLIGYVPSVILFTYI), 1139–1159 (FIYSVAALACIAITEITFFMG), 1169–1189 (AFCIIIPIYPLLGCLISFIKI), and 1207–1227 (LSVAVISPYLQCVLWIFLLQY). The tract at residues 1249-1268 (KSKNRKLPEPPDNEDEDEDV) is disordered. The segment covering 1259–1268 (PDNEDEDEDV) has biased composition (acidic residues). Residues 1290 to 1533 (IMVSNLHKEY…FGKGYFLEIK (244 aa)) form the ABC transporter 2 domain. Residue 1333–1340 (GPNGAGKS) coordinates ATP.

This sequence belongs to the ABC transporter superfamily. ABCA family. N-glycosylated. As to expression, ubiquitously expressed. Highly expressed in testis, skeletal muscle, kidney, liver and placenta. Expressed in both the epithelial and mesenchymal compartments, present within the outer root sheath (ORS) of the hair follicle as well as dermal sheath. Expressed in multiple regions of the brain, including the hippocampus, superior frontal and inferior temporal cortices. Strongly expressed in neurons and moderately in microglia, with only weak expression in astrocytes and oligodendrocytes.

The protein resides in the golgi apparatus membrane. The protein localises to the lysosome membrane. It is found in the late endosome membrane. It localises to the cell membrane. The enzyme catalyses cholesterol(in) + ATP + H2O = cholesterol(out) + ADP + phosphate + H(+). In terms of biological role, cholesterol efflux transporter in macrophages that is responsible for APOAI/high-density lipoproteins (HDL) formation at the plasma membrane under high cholesterol levels and participates in reverse cholesterol transport. May play a role in the processing of autolysosomes. The protein is Cholesterol transporter ABCA5 of Homo sapiens (Human).